Reading from the N-terminus, the 315-residue chain is Methionyl-tRNA formyltransferase (315 aa).

(6S)-5,6,7,8-tetrahydrofolate is bound at residue 113–116; it reads SLLP.

The protein belongs to the Fmt family.

It carries out the reaction L-methionyl-tRNA(fMet) + (6R)-10-formyltetrahydrofolate = N-formyl-L-methionyl-tRNA(fMet) + (6S)-5,6,7,8-tetrahydrofolate + H(+). Attaches a formyl group to the free amino group of methionyl-tRNA(fMet). The formyl group appears to play a dual role in the initiator identity of N-formylmethionyl-tRNA by promoting its recognition by IF2 and preventing the misappropriation of this tRNA by the elongation apparatus. This is Methionyl-tRNA formyltransferase from Photorhabdus laumondii subsp. laumondii (strain DSM 15139 / CIP 105565 / TT01) (Photorhabdus luminescens subsp. laumondii).